A 438-amino-acid chain; its full sequence is 2-(3-amino-3-carboxypropyl)histidine synthase subunit 1 (438 aa).

A disordered region spans residues 7–29 (SGAAEQGGRDGPGRGRAPRGRVA). C110, C214, and C342 together coordinate [4Fe-4S] cluster. The interval 391–421 (VNHGQDRRPHAPGRPARGKVQEGSARPPSAV) is disordered.

Belongs to the DPH1/DPH2 family. DPH1 subfamily. As to quaternary structure, component of the 2-(3-amino-3-carboxypropyl)histidine synthase complex composed of DPH1, DPH2, DPH3 and a NADH-dependent reductase. Interacts with DPH2. Interacts with RBM8A. [4Fe-4S] cluster serves as cofactor. As to expression, expressed in heart, brain, placenta, lung, liver, skeletal muscle, kidney, pancreas, spleen, thymus, mammary gland, colon, small intestine, testis and ovary. Reduced expression in primary breast and ovarian tumors.

The protein localises to the nucleus. It is found in the cytoplasm. The enzyme catalyses L-histidyl-[translation elongation factor 2] + S-adenosyl-L-methionine = 2-[(3S)-amino-3-carboxypropyl]-L-histidyl-[translation elongation factor 2] + S-methyl-5'-thioadenosine + H(+). The protein operates within protein modification; peptidyl-diphthamide biosynthesis. Functionally, catalyzes the first step of diphthamide biosynthesis, a post-translational modification of histidine which occurs in elongation factor 2. DPH1 and DPH2 transfer a 3-amino-3-carboxypropyl (ACP) group from S-adenosyl-L-methionine (SAM) to a histidine residue, the reaction is assisted by a reduction system comprising DPH3 and a NADH-dependent reductase. Acts as a tumor suppressor. The polypeptide is 2-(3-amino-3-carboxypropyl)histidine synthase subunit 1 (Homo sapiens (Human)).